A 694-amino-acid chain; its full sequence is Elongation factor G 2 (694 aa).

A tr-type G domain is found at 6–282 (SKLRNIGISA…GVVDYLPDPT (277 aa)). GTP contacts are provided by residues 15 to 22 (AHIDSGKT), 82 to 86 (DTPGH), and 136 to 139 (NKCD).

This sequence belongs to the TRAFAC class translation factor GTPase superfamily. Classic translation factor GTPase family. EF-G/EF-2 subfamily.

Its subcellular location is the cytoplasm. Its function is as follows. Catalyzes the GTP-dependent ribosomal translocation step during translation elongation. During this step, the ribosome changes from the pre-translocational (PRE) to the post-translocational (POST) state as the newly formed A-site-bound peptidyl-tRNA and P-site-bound deacylated tRNA move to the P and E sites, respectively. Catalyzes the coordinated movement of the two tRNA molecules, the mRNA and conformational changes in the ribosome. This chain is Elongation factor G 2, found in Anaeromyxobacter dehalogenans (strain 2CP-C).